An 846-amino-acid polypeptide reads, in one-letter code: Translation initiation factor IF-2 (846 aa).

In terms of domain architecture, tr-type G spans 345–512 (SRAPVVTIMG…AVLLQSEVLE (168 aa)). The interval 354-361 (GHVDHGKT) is G1. 354–361 (GHVDHGKT) contributes to the GTP binding site. Residues 379–383 (GITQH) form a G2 region. The G3 stretch occupies residues 400–403 (DTPG). GTP-binding positions include 400 to 404 (DTPGH) and 454 to 457 (NKID). The tract at residues 454 to 457 (NKID) is G4. Residues 490–492 (SAK) are G5.

This sequence belongs to the TRAFAC class translation factor GTPase superfamily. Classic translation factor GTPase family. IF-2 subfamily.

Its subcellular location is the cytoplasm. Functionally, one of the essential components for the initiation of protein synthesis. Protects formylmethionyl-tRNA from spontaneous hydrolysis and promotes its binding to the 30S ribosomal subunits. Also involved in the hydrolysis of GTP during the formation of the 70S ribosomal complex. The polypeptide is Translation initiation factor IF-2 (Francisella tularensis subsp. holarctica (strain FTNF002-00 / FTA)).